The chain runs to 93 residues: MDGIKYAVVTDKSIRLLLKNQYTSNVESGSTRTEIKHWVELFFGVKVIAMNSHRLPGKGRRMRPIMGHTMHYRRMIITLQPGYSIPPLRKKRT.

The protein belongs to the universal ribosomal protein uL23 family. In terms of assembly, part of the 50S ribosomal subunit.

It is found in the plastid. The protein resides in the chloroplast. Its function is as follows. Binds to 23S rRNA. In Populus alba (White poplar), this protein is Large ribosomal subunit protein uL23cz/uL23cy (rpl23-A).